Reading from the N-terminus, the 255-residue chain is UPF0246 protein Caul_4480 (255 aa).

The protein belongs to the UPF0246 family.

The chain is UPF0246 protein Caul_4480 from Caulobacter sp. (strain K31).